A 247-amino-acid polypeptide reads, in one-letter code: Probable transcriptional regulatory protein Hhal_2210 (247 aa).

Belongs to the TACO1 family.

The protein localises to the cytoplasm. This chain is Probable transcriptional regulatory protein Hhal_2210, found in Halorhodospira halophila (strain DSM 244 / SL1) (Ectothiorhodospira halophila (strain DSM 244 / SL1)).